The chain runs to 292 residues: MSDGLCNGISFNVSEGHGPNYIVGRYKLGFVQQGILFLDPYECLYLYFKGRITFEDSEESALKKLFSITSVERYTAYTLLKNKGYRVHEDNGTIFFRKSTEIPRSVVVVREYDEIDVGKFFTERPDFYFTVDEEGDATIYRIDEIDIKGTENNKIGKCSVTDFGDRHFTKDDLPHWMGTKFHEYRMLTDFEANLIEGKEPKGMAEEVYRDLLSRGCIVKTGFKYGTNFRVYEGEKSEHAEYLVSVVENKLIWYYISRAVRVASSVRKKMIFTTIIDGKIKYIMISRSKDIVI.

Residues Tyr-231, His-238, and Lys-267 contribute to the active site.

The protein belongs to the tRNA-intron endonuclease family. Archaeal long subfamily. As to quaternary structure, homodimer.

The catalysed reaction is pretRNA = a 3'-half-tRNA molecule with a 5'-OH end + a 5'-half-tRNA molecule with a 2',3'-cyclic phosphate end + an intron with a 2',3'-cyclic phosphate and a 5'-hydroxyl terminus.. Endonuclease that removes tRNA introns. Cleaves pre-tRNA at the 5'- and 3'-splice sites to release the intron. The products are an intron and two tRNA half-molecules bearing 2',3' cyclic phosphate and 5'-OH termini. Recognizes a pseudosymmetric substrate in which 2 bulged loops of 3 bases are separated by a stem of 4 bp. This is tRNA-splicing endonuclease from Thermoplasma volcanium (strain ATCC 51530 / DSM 4299 / JCM 9571 / NBRC 15438 / GSS1).